A 134-amino-acid polypeptide reads, in one-letter code: Holo-[acyl-carrier-protein] synthase (134 aa).

The Mg(2+) site is built by Asp8 and Glu57.

The protein belongs to the P-Pant transferase superfamily. AcpS family. Requires Mg(2+) as cofactor.

It is found in the cytoplasm. It catalyses the reaction apo-[ACP] + CoA = holo-[ACP] + adenosine 3',5'-bisphosphate + H(+). Functionally, transfers the 4'-phosphopantetheine moiety from coenzyme A to a Ser of acyl-carrier-protein. This Rhizobium etli (strain ATCC 51251 / DSM 11541 / JCM 21823 / NBRC 15573 / CFN 42) protein is Holo-[acyl-carrier-protein] synthase.